Here is a 273-residue protein sequence, read N- to C-terminus: NH(3)-dependent NAD(+) synthetase (273 aa).

47–54 (GISGGQDS) contacts ATP. Mg(2+) is bound at residue Asp53. Arg139 serves as a coordination point for deamido-NAD(+). Position 159 (Thr159) interacts with ATP. Glu164 provides a ligand contact to Mg(2+). Deamido-NAD(+) is bound by residues Lys172 and Asp179. Residues Lys188 and Thr210 each contribute to the ATP site. A deamido-NAD(+)-binding site is contributed by 259–260 (HK).

Belongs to the NAD synthetase family. As to quaternary structure, homodimer.

It carries out the reaction deamido-NAD(+) + NH4(+) + ATP = AMP + diphosphate + NAD(+) + H(+). The protein operates within cofactor biosynthesis; NAD(+) biosynthesis; NAD(+) from deamido-NAD(+) (ammonia route): step 1/1. Its function is as follows. Catalyzes the ATP-dependent amidation of deamido-NAD to form NAD. Uses ammonia as a nitrogen source. This is NH(3)-dependent NAD(+) synthetase from Staphylococcus aureus (strain N315).